Reading from the N-terminus, the 212-residue chain is Fibrillarin-like rRNA/tRNA 2'-O-methyltransferase (212 aa).

S-adenosyl-L-methionine contacts are provided by residues 73–74 (TT), 91–92 (EI), 116–117 (DA), and 136–139 (DVAQ).

The protein belongs to the methyltransferase superfamily. Fibrillarin family. As to quaternary structure, interacts with nop5. Component of box C/D small ribonucleoprotein (sRNP) particles that contain rpl7ae, FlpA and nop5, plus a guide RNA.

Functionally, involved in pre-rRNA and tRNA processing. Utilizes the methyl donor S-adenosyl-L-methionine to catalyze the site-specific 2'-hydroxyl methylation of ribose moieties in rRNA and tRNA. Site specificity is provided by a guide RNA that base pairs with the substrate. Methylation occurs at a characteristic distance from the sequence involved in base pairing with the guide RNA. This Methanothrix thermoacetophila (strain DSM 6194 / JCM 14653 / NBRC 101360 / PT) (Methanosaeta thermophila) protein is Fibrillarin-like rRNA/tRNA 2'-O-methyltransferase.